The following is a 158-amino-acid chain: C-type lectin galactose-binding isoform (158 aa).

An N-terminal signal peptide occupies residues 1–23; sequence MGRFLLVTLSLLVVAFSLNGANS. Intrachain disulfides connect C26-C37, C54-C154, and C129-C146. Positions 33–155 constitute a C-type lectin domain; that stretch reads RNGFCYKVFN…CTALRPFLCQ (123 aa). Ca(2+) is bound by residues Q119, D121, and E127. Positions 119 to 121 match the Galactose-binding motif; that stretch reads QPD. A glycan (N-linked (GlcNAc...) asparagine) is linked at N134. N142 and D143 together coordinate Ca(2+).

Belongs to the true venom lectin family. In terms of assembly, homodimer; disulfide-linked. As to expression, expressed by the venom gland.

The protein resides in the secreted. Its function is as follows. Galactose-binding lectin that binds to and agglutinates erythrocytes in a calcium-dependent manner. This Pseudechis porphyriacus (Red-bellied black snake) protein is C-type lectin galactose-binding isoform.